Reading from the N-terminus, the 276-residue chain is Stathmin domain-containing protein 1 (276 aa).

Disordered regions lie at residues 1 to 40, 61 to 106, and 226 to 250; these read MGCG…ENCS, VQMG…RERQ, and GFEP…ATLI. The N-myristoyl glycine moiety is linked to residue Gly2. 2 stretches are compositionally biased toward polar residues: residues 68 to 78 and 87 to 100; these read GTISENSPSPS and DLVT…PQSL. An SLD domain is found at 118-244; that stretch reads QGIIQSHSKV…GKPLKRKKSK (127 aa).

This chain is Stathmin domain-containing protein 1 (STMND1), found in Homo sapiens (Human).